The following is a 476-amino-acid chain: Glutamate--tRNA ligase 1 (476 aa).

Positions 9–19 (PSPTGFLHIGG) match the 'HIGH' region motif. The 'KMSKS' region signature appears at 238–242 (KLSKR). Lys241 lines the ATP pocket.

The protein belongs to the class-I aminoacyl-tRNA synthetase family. Glutamate--tRNA ligase type 1 subfamily. Monomer.

Its subcellular location is the cytoplasm. It catalyses the reaction tRNA(Glu) + L-glutamate + ATP = L-glutamyl-tRNA(Glu) + AMP + diphosphate. In terms of biological role, catalyzes the attachment of glutamate to tRNA(Glu) in a two-step reaction: glutamate is first activated by ATP to form Glu-AMP and then transferred to the acceptor end of tRNA(Glu). This Bartonella bacilliformis (strain ATCC 35685 / KC583 / Herrer 020/F12,63) protein is Glutamate--tRNA ligase 1.